Consider the following 887-residue polypeptide: Translation initiation factor IF-2 (887 aa).

Positions Met1–Ala259 are disordered. Positions Gly62 to Glu94 are enriched in low complexity. Basic and acidic residues-rich tracts occupy residues Gln95–Lys111 and Glu119–Ala158. The segment covering Glu159–Thr210 has biased composition (low complexity). Basic and acidic residues predominate over residues Lys250–Ala259. The tr-type G domain maps to Val386 to Lys556. The segment at Gly395–Thr402 is G1. Gly395–Thr402 serves as a coordination point for GTP. The tract at residues Gly420–His424 is G2. The G3 stretch occupies residues Asp442–Gly445. GTP is bound by residues Asp442–His446 and Asn496–Asp499. A G4 region spans residues Asn496–Asp499. A G5 region spans residues Ser532 to Leu534.

Belongs to the TRAFAC class translation factor GTPase superfamily. Classic translation factor GTPase family. IF-2 subfamily.

It localises to the cytoplasm. One of the essential components for the initiation of protein synthesis. Protects formylmethionyl-tRNA from spontaneous hydrolysis and promotes its binding to the 30S ribosomal subunits. Also involved in the hydrolysis of GTP during the formation of the 70S ribosomal complex. This Acidiphilium cryptum (strain JF-5) protein is Translation initiation factor IF-2.